A 375-amino-acid chain; its full sequence is Succinyl-diaminopimelate desuccinylase (375 aa).

Histidine 66 is a Zn(2+) binding site. Residue aspartate 68 is part of the active site. Aspartate 99 is a binding site for Zn(2+). Catalysis depends on glutamate 133, which acts as the Proton acceptor. Zn(2+) contacts are provided by glutamate 134, glutamate 162, and histidine 348.

The protein belongs to the peptidase M20A family. DapE subfamily. In terms of assembly, homodimer. The cofactor is Zn(2+). It depends on Co(2+) as a cofactor.

The catalysed reaction is N-succinyl-(2S,6S)-2,6-diaminopimelate + H2O = (2S,6S)-2,6-diaminopimelate + succinate. Its pathway is amino-acid biosynthesis; L-lysine biosynthesis via DAP pathway; LL-2,6-diaminopimelate from (S)-tetrahydrodipicolinate (succinylase route): step 3/3. Functionally, catalyzes the hydrolysis of N-succinyl-L,L-diaminopimelic acid (SDAP), forming succinate and LL-2,6-diaminopimelate (DAP), an intermediate involved in the bacterial biosynthesis of lysine and meso-diaminopimelic acid, an essential component of bacterial cell walls. In Escherichia coli (strain SE11), this protein is Succinyl-diaminopimelate desuccinylase.